Consider the following 234-residue polypeptide: 5'-methylthioadenosine/S-adenosylhomocysteine nucleosidase (234 aa).

Residue Glu12 is the Proton acceptor of the active site. Residues Gly78, Ile152, and 173 to 174 (ME) each bind substrate. Asp197 serves as the catalytic Proton donor.

This sequence belongs to the PNP/UDP phosphorylase family. MtnN subfamily.

It catalyses the reaction S-adenosyl-L-homocysteine + H2O = S-(5-deoxy-D-ribos-5-yl)-L-homocysteine + adenine. The catalysed reaction is S-methyl-5'-thioadenosine + H2O = 5-(methylsulfanyl)-D-ribose + adenine. The enzyme catalyses 5'-deoxyadenosine + H2O = 5-deoxy-D-ribose + adenine. It functions in the pathway amino-acid biosynthesis; L-methionine biosynthesis via salvage pathway; S-methyl-5-thio-alpha-D-ribose 1-phosphate from S-methyl-5'-thioadenosine (hydrolase route): step 1/2. Catalyzes the irreversible cleavage of the glycosidic bond in both 5'-methylthioadenosine (MTA) and S-adenosylhomocysteine (SAH/AdoHcy) to adenine and the corresponding thioribose, 5'-methylthioribose and S-ribosylhomocysteine, respectively. Also cleaves 5'-deoxyadenosine, a toxic by-product of radical S-adenosylmethionine (SAM) enzymes, into 5-deoxyribose and adenine. This Desulfotalea psychrophila (strain LSv54 / DSM 12343) protein is 5'-methylthioadenosine/S-adenosylhomocysteine nucleosidase.